Reading from the N-terminus, the 418-residue chain is MTLLALGINHKTAPVALRERVTFSPDTLDQALDSLLAQPMVQGGVVLSTCNRTELYLSVEEQDNLHEALIRWLCEYHNLNEEELRTSVYWHQDNDAVSHLMRVASGLDSLVLGEPQILGQVKKAFADSQKGHLKASELERMFQKSFSVAKRVRTETDIGASAVSVAFAACTLARQIFESLSTVTVLLVGAGETIELVARHLREHKVKHMIIANRTRERAQVLADEVGAEVIALSDIDERLKDADIIISSTASPLPIIGKGMVERALKSRRNQPMLLVDIAVPRDVEPEVGKLANAYLYSVDDLQSIISHNLAQRKAAAVQAETIVEQESGEFMAWLRAQSASETIREYRGQAEQVRDDLTAKAMAALEQGGDPQVIMQDLAWKLTNRLIHAPTKSLQQAARNGDDERLTILRNSLGLE.

Substrate contacts are provided by residues 49-52 (TCNR), Ser-109, 114-116 (EPQ), and Gln-120. Cys-50 (nucleophile) is an active-site residue. 189–194 (GAGETI) is a binding site for NADP(+).

Belongs to the glutamyl-tRNA reductase family. Homodimer.

It carries out the reaction (S)-4-amino-5-oxopentanoate + tRNA(Glu) + NADP(+) = L-glutamyl-tRNA(Glu) + NADPH + H(+). The protein operates within porphyrin-containing compound metabolism; protoporphyrin-IX biosynthesis; 5-aminolevulinate from L-glutamyl-tRNA(Glu): step 1/2. In terms of biological role, catalyzes the NADPH-dependent reduction of glutamyl-tRNA(Glu) to glutamate 1-semialdehyde (GSA). In Enterobacter sp. (strain 638), this protein is Glutamyl-tRNA reductase.